The sequence spans 390 residues: Elongation factor Ts, mitochondrial (390 aa).

Belongs to the EF-Ts family.

The protein resides in the mitochondrion. Associates with the EF-Tu.GDP complex and induces the exchange of GDP to GTP. It remains bound to the aminoacyl-tRNA.EF-Tu.GTP complex up to the GTP hydrolysis stage on the ribosome. The sequence is that of Elongation factor Ts, mitochondrial from Plasmodium falciparum (isolate 3D7).